The primary structure comprises 382 residues: Chaperone protein DnaJ (382 aa).

Positions 5–70 constitute a J domain; that stretch reads DYYEVLGVSR…DKKAAYDRYG (66 aa). The CR-type zinc-finger motif lies at 141 to 219; it reads GVQKTINVPA…CHGAGRVEKE (79 aa). Residues Cys154, Cys157, Cys171, Cys174, Cys193, Cys196, Cys207, and Cys210 each coordinate Zn(2+). CXXCXGXG motif repeat units lie at residues 154-161, 171-178, 193-200, and 207-214; these read CDSCKGTG, CPTCSGMG, CPTCNGMG, and CKSCHGAG.

It belongs to the DnaJ family. As to quaternary structure, homodimer. The cofactor is Zn(2+).

Its subcellular location is the cytoplasm. In terms of biological role, participates actively in the response to hyperosmotic and heat shock by preventing the aggregation of stress-denatured proteins and by disaggregating proteins, also in an autonomous, DnaK-independent fashion. Unfolded proteins bind initially to DnaJ; upon interaction with the DnaJ-bound protein, DnaK hydrolyzes its bound ATP, resulting in the formation of a stable complex. GrpE releases ADP from DnaK; ATP binding to DnaK triggers the release of the substrate protein, thus completing the reaction cycle. Several rounds of ATP-dependent interactions between DnaJ, DnaK and GrpE are required for fully efficient folding. Also involved, together with DnaK and GrpE, in the DNA replication of plasmids through activation of initiation proteins. The sequence is that of Chaperone protein DnaJ from Cereibacter sphaeroides (strain ATCC 17025 / ATH 2.4.3) (Rhodobacter sphaeroides).